A 206-amino-acid polypeptide reads, in one-letter code: Large ribosomal subunit protein uL4 (206 aa).

The segment at 47 to 77 is disordered; sequence GTQSTKTRSEVRGGGIKPWRQKGTGRARQGS.

This sequence belongs to the universal ribosomal protein uL4 family. In terms of assembly, part of the 50S ribosomal subunit.

One of the primary rRNA binding proteins, this protein initially binds near the 5'-end of the 23S rRNA. It is important during the early stages of 50S assembly. It makes multiple contacts with different domains of the 23S rRNA in the assembled 50S subunit and ribosome. Its function is as follows. Forms part of the polypeptide exit tunnel. In Clostridium beijerinckii (strain ATCC 51743 / NCIMB 8052) (Clostridium acetobutylicum), this protein is Large ribosomal subunit protein uL4.